We begin with the raw amino-acid sequence, 209 residues long: Urease accessory protein UreG (209 aa).

Position 10 to 17 (10 to 17 (GPVGSGKT)) interacts with GTP.

The protein belongs to the SIMIBI class G3E GTPase family. UreG subfamily. Homodimer. UreD, UreF and UreG form a complex that acts as a GTP-hydrolysis-dependent molecular chaperone, activating the urease apoprotein by helping to assemble the nickel containing metallocenter of UreC. The UreE protein probably delivers the nickel.

It localises to the cytoplasm. Facilitates the functional incorporation of the urease nickel metallocenter. This process requires GTP hydrolysis, probably effectuated by UreG. In Lysinibacillus sphaericus (strain C3-41), this protein is Urease accessory protein UreG.